Reading from the N-terminus, the 224-residue chain is Cytidylate kinase (224 aa).

ATP is bound at residue 9 to 17; sequence GPSGVGKGT.

Belongs to the cytidylate kinase family. Type 1 subfamily.

It localises to the cytoplasm. It catalyses the reaction CMP + ATP = CDP + ADP. The catalysed reaction is dCMP + ATP = dCDP + ADP. The protein is Cytidylate kinase of Dichelobacter nodosus (strain VCS1703A).